The following is a 432-amino-acid chain: Chorismate synthase aro-2 (432 aa).

Residues H17, H106, and D367 contribute to the active site. The tract at residues 406 to 432 (LKQTINSGKDTVGNGVSENVQESDLAQ) is disordered. Over residues 408–432 (QTINSGKDTVGNGVSENVQESDLAQ) the composition is skewed to polar residues.

Belongs to the chorismate synthase family. Homotetramer.

The catalysed reaction is 5-O-(1-carboxyvinyl)-3-phosphoshikimate = chorismate + phosphate. The enzyme catalyses FMNH2 + NADP(+) = FMN + NADPH + 2 H(+). It functions in the pathway metabolic intermediate biosynthesis; chorismate biosynthesis; chorismate from D-erythrose 4-phosphate and phosphoenolpyruvate: step 7/7. Its function is as follows. Bifunctional chorismate synthase and flavin reductase that catalyzes the conversion of 5-enolpyruvylshikimate 3-phosphate (EPSP) to form chorismate, which is the last common intermediate in the synthesis of the three aromatic amino acids phenylalanine, tyrosine and tryptophan. Acts also as a flavin reductase (FR) able to generate reduced flavin mononucleotide in the presence of NADPH. The protein is Chorismate synthase aro-2 of Neurospora crassa (strain ATCC 24698 / 74-OR23-1A / CBS 708.71 / DSM 1257 / FGSC 987).